We begin with the raw amino-acid sequence, 299 residues long: MANFPASLLILNGKSADNQPLREAITLLRDEGIQIHVRVTWEKGDAQRYVDEARRLGVETVIAGGGDGTINEVSTALIQIRDGVAPALGLLPLGTANDFATSAGIPEALDKALKLAIAGNAMEIDMARVNDKTCFINMATGGFGTRITTETPEKLKAALGGVSYLIHGLMRMDTLTPDRCEIRGENFHWQGDALVIGIGNGRQAGGGQQLCPTALVNDGLLQLRIFTGEELLPALFSTLTQSDDNPNIIDGASAWFDIHAPHEITFNLDGEPLSGQEFHIEVLPGALRCRLPPDCPLLR.

In terms of domain architecture, DAGKc spans 2-133; that stretch reads ANFPASLLIL…IDMARVNDKT (132 aa). Residues Thr40, 66–72, and Thr95 contribute to the ATP site; that span reads GDGTINE. Residues Leu215, Asp218, and Leu220 each contribute to the Mg(2+) site. Glu271 functions as the Proton acceptor in the catalytic mechanism.

The protein belongs to the diacylglycerol/lipid kinase family. YegS lipid kinase subfamily. Requires Mg(2+) as cofactor. Ca(2+) is required as a cofactor.

It is found in the cytoplasm. Functionally, probably phosphorylates lipids; the in vivo substrate is unknown. The sequence is that of Probable lipid kinase YegS from Salmonella paratyphi A (strain ATCC 9150 / SARB42).